Consider the following 188-residue polypeptide: Ribosomal RNA small subunit methyltransferase G (188 aa).

Residues glycine 69, phenylalanine 74, 119-120 (VQ), and arginine 134 contribute to the S-adenosyl-L-methionine site.

This sequence belongs to the methyltransferase superfamily. RNA methyltransferase RsmG family.

It is found in the cytoplasm. It catalyses the reaction guanosine(527) in 16S rRNA + S-adenosyl-L-methionine = N(7)-methylguanosine(527) in 16S rRNA + S-adenosyl-L-homocysteine. Specifically methylates the N7 position of guanine in position 527 of 16S rRNA. The polypeptide is Ribosomal RNA small subunit methyltransferase G (Campylobacter jejuni subsp. jejuni serotype O:23/36 (strain 81-176)).